Here is a 398-residue protein sequence, read N- to C-terminus: Fructose-bisphosphate aldolase 2, chloroplastic (398 aa).

The transit peptide at 1 to 46 (MASTSLLKASPVLDKSEWVKGQSVLFRQPSSASVVLRNRATSLTVR) directs the protein to the chloroplast. Arginine 95 serves as a coordination point for substrate. Serine 157 carries the post-translational modification Phosphoserine. Lysine 185 provides a ligand contact to substrate. Serine 215 carries the post-translational modification Phosphoserine. Glutamate 225 acts as the Proton acceptor in catalysis. Lysine 267 serves as the catalytic Schiff-base intermediate with dihydroxyacetone-P. 309-311 (SGG) provides a ligand contact to substrate. Lysine 394 carries the post-translational modification N6,N6,N6-trimethyllysine.

Belongs to the class I fructose-bisphosphate aldolase family. As to quaternary structure, homotetramer. In terms of processing, can be trimethylated at Lys-394 by LSMT-L. The methylation level has no influence on the ologomerization state or on the kinetic properties of the enzyme. Phosphorylated on tyrosine residues in response to abscisic acid (ABA) in germinating seeds. As to expression, highly expressed in rosettes leaves.

The protein resides in the plastid. The protein localises to the chloroplast. It is found in the plastoglobule. Its subcellular location is the chloroplast stroma. The catalysed reaction is beta-D-fructose 1,6-bisphosphate = D-glyceraldehyde 3-phosphate + dihydroxyacetone phosphate. Its pathway is carbohydrate degradation; glycolysis; D-glyceraldehyde 3-phosphate and glycerone phosphate from D-glucose: step 4/4. In terms of biological role, plays a key role in glycolysis and gluconeogenesis. This Arabidopsis thaliana (Mouse-ear cress) protein is Fructose-bisphosphate aldolase 2, chloroplastic.